A 268-amino-acid chain; its full sequence is Tryptophan synthase alpha chain (268 aa).

Residues E49 and D60 each act as proton acceptor in the active site.

It belongs to the TrpA family. As to quaternary structure, tetramer of two alpha and two beta chains.

The catalysed reaction is (1S,2R)-1-C-(indol-3-yl)glycerol 3-phosphate + L-serine = D-glyceraldehyde 3-phosphate + L-tryptophan + H2O. It participates in amino-acid biosynthesis; L-tryptophan biosynthesis; L-tryptophan from chorismate: step 5/5. Its function is as follows. The alpha subunit is responsible for the aldol cleavage of indoleglycerol phosphate to indole and glyceraldehyde 3-phosphate. This is Tryptophan synthase alpha chain from Pectobacterium atrosepticum (strain SCRI 1043 / ATCC BAA-672) (Erwinia carotovora subsp. atroseptica).